The chain runs to 208 residues: MTQIKICGLMRPADVVMVNQALPDAIGMVFAPGRRRRITMATARQLSQQLDPRIRRVGVFTTNQLSEILALVQQHIIQVVQLHATVDDPRIASLMAAHVPVIQAMTPANATQCQADYLLLDNARPGSGQVLDWNQLQSQRPVRPFILAGGLTPTNIVTAINKVYPAMVDVASGVETAGNKDREKINLMVQRAHQTGVSTPLLTEIRRN.

It belongs to the TrpF family.

The catalysed reaction is N-(5-phospho-beta-D-ribosyl)anthranilate = 1-(2-carboxyphenylamino)-1-deoxy-D-ribulose 5-phosphate. The protein operates within amino-acid biosynthesis; L-tryptophan biosynthesis; L-tryptophan from chorismate: step 3/5. The sequence is that of N-(5'-phosphoribosyl)anthranilate isomerase from Lactiplantibacillus plantarum (strain ATCC BAA-793 / NCIMB 8826 / WCFS1) (Lactobacillus plantarum).